Reading from the N-terminus, the 428-residue chain is Serine--tRNA ligase (428 aa).

Residue 231–233 (TSE) participates in L-serine binding. Residues 262-264 (RRE) and Val278 each bind ATP. Glu285 contributes to the L-serine binding site. 349–352 (ELTS) serves as a coordination point for ATP. L-serine is bound at residue Thr384.

It belongs to the class-II aminoacyl-tRNA synthetase family. Type-1 seryl-tRNA synthetase subfamily. As to quaternary structure, homodimer. The tRNA molecule binds across the dimer.

The protein resides in the cytoplasm. It catalyses the reaction tRNA(Ser) + L-serine + ATP = L-seryl-tRNA(Ser) + AMP + diphosphate + H(+). The enzyme catalyses tRNA(Sec) + L-serine + ATP = L-seryl-tRNA(Sec) + AMP + diphosphate + H(+). Its pathway is aminoacyl-tRNA biosynthesis; selenocysteinyl-tRNA(Sec) biosynthesis; L-seryl-tRNA(Sec) from L-serine and tRNA(Sec): step 1/1. In terms of biological role, catalyzes the attachment of serine to tRNA(Ser). Is also able to aminoacylate tRNA(Sec) with serine, to form the misacylated tRNA L-seryl-tRNA(Sec), which will be further converted into selenocysteinyl-tRNA(Sec). The polypeptide is Serine--tRNA ligase (Bifidobacterium animalis subsp. lactis (strain AD011)).